Here is a 386-residue protein sequence, read N- to C-terminus: Tryptophan--tRNA ligase (386 aa).

Residues 82 to 90 (PSGPMHIGH) carry the 'HIGH' region motif. Residues 253 to 257 (KMSAS) carry the 'KMSKS' region motif.

It belongs to the class-I aminoacyl-tRNA synthetase family.

The protein localises to the cytoplasm. It catalyses the reaction tRNA(Trp) + L-tryptophan + ATP = L-tryptophyl-tRNA(Trp) + AMP + diphosphate + H(+). This Pyrococcus horikoshii (strain ATCC 700860 / DSM 12428 / JCM 9974 / NBRC 100139 / OT-3) protein is Tryptophan--tRNA ligase.